Reading from the N-terminus, the 370-residue chain is 3-dehydroquinate synthase (370 aa).

NAD(+)-binding positions include 112–116 (GVVGD), 136–137 (TS), lysine 149, lysine 158, and 176–179 (TLRT). Zn(2+) contacts are provided by glutamate 191, histidine 254, and histidine 276.

The protein belongs to the sugar phosphate cyclases superfamily. Dehydroquinate synthase family. It depends on Co(2+) as a cofactor. Requires Zn(2+) as cofactor. NAD(+) is required as a cofactor.

It is found in the cytoplasm. The enzyme catalyses 7-phospho-2-dehydro-3-deoxy-D-arabino-heptonate = 3-dehydroquinate + phosphate. It functions in the pathway metabolic intermediate biosynthesis; chorismate biosynthesis; chorismate from D-erythrose 4-phosphate and phosphoenolpyruvate: step 2/7. Functionally, catalyzes the conversion of 3-deoxy-D-arabino-heptulosonate 7-phosphate (DAHP) to dehydroquinate (DHQ). The chain is 3-dehydroquinate synthase from Xanthomonas campestris pv. campestris (strain 8004).